The primary structure comprises 291 residues: Homeobox protein SIX2 (291 aa).

The homeobox DNA-binding region spans 124–183 (GEETSYCFKEKSRSVLREWYAHNPYPSPREKRELAEATGLTTTQVSNWFKNRRQRDRAAE). Residues 168 to 279 (VSNWFKNRRQ…HHHGLQDSIL (112 aa)) are disordered. The segment covering 179 to 190 (DRAAEAKERENN) has biased composition (basic and acidic residues). A compositionally biased stretch (low complexity) spans 224–233 (HSSSSPALLL). Residues 249–259 (PPGPSAVPVPV) show a composition bias toward pro residues.

It belongs to the SIX/Sine oculis homeobox family. As to quaternary structure, interacts with TCF7L2; in a canonical Wnt signaling independent manner; prevents transcription of differentiation genes in cap mesenchyme. Interacts with OSR1; form a strong repressor complex with TCF7L2, TLE2 and TLE3 to prevent the activation of Wnt/beta-catenin target genes in the cap mesenchyme. Interacts with HOXA11, EYA1 and EYA3. In terms of tissue distribution, strongly expressed in skeletal muscle. Expressed in Wilms' tumor and in the cap mesenchyme of fetal kidney (at protein level).

Its subcellular location is the nucleus. Its function is as follows. Transcription factor that plays an important role in the development of several organs, including kidney, skull and stomach. During kidney development, maintains cap mesenchyme multipotent nephron progenitor cells in an undifferentiated state by opposing the inductive signals emanating from the ureteric bud and cooperates with WNT9B to promote renewing progenitor cells proliferation. Acts through its interaction with TCF7L2 and OSR1 in a canonical Wnt signaling independent manner preventing transcription of differentiation genes in cap mesenchyme such as WNT4. Also acts independently of OSR1 to activate expression of many cap mesenchyme genes, including itself, GDNF and OSR1. During craniofacial development plays a role in growth and elongation of the cranial base through regulation of chondrocyte differentiation. During stomach organogenesis, controls pyloric sphincter formation and mucosal growth through regulation of a gene network including NKX2-5, BMPR1B, BMP4, SOX9 and GREM1. During branchial arch development, acts to mediate HOXA2 control over the insulin-like growth factor pathway. May also be involved in limb tendon and ligament development. Plays a role in cell proliferation and migration. The protein is Homeobox protein SIX2 (SIX2) of Homo sapiens (Human).